Here is a 28-residue protein sequence, read N- to C-terminus: Cyclotide vodo I3 (28 aa).

3 cysteine pairs are disulfide-bonded: Cys4/Cys18, Cys8/Cys20, and Cys13/Cys25.

In terms of processing, this is a cyclic peptide. Post-translationally, contains 3 disulfide bonds.

Probably participates in a plant defense mechanism. The chain is Cyclotide vodo I3 from Viola odorata (Sweet violet).